Here is a 313-residue protein sequence, read N- to C-terminus: uncharacterized protein (313 aa).

A signal peptide spans methionine 1 to alanine 24. 14 N-linked (GlcNAc...) asparagine; by host glycosylation sites follow: asparagine 28, asparagine 43, asparagine 57, asparagine 77, asparagine 101, asparagine 102, asparagine 109, asparagine 149, asparagine 168, asparagine 215, asparagine 222, asparagine 251, asparagine 254, and asparagine 267. The disordered stretch occupies residues alanine 47–serine 73. Residues serine 90–serine 114 show a composition bias toward low complexity. The interval serine 90 to valine 117 is disordered.

This sequence belongs to the HHV-5 US34A protein family.

This is an uncharacterized protein from Homo sapiens (Human).